The following is a 246-amino-acid chain: Acetoacetate decarboxylase (246 aa).

The Schiff-base intermediate with acetoacetate role is filled by Lys-116.

It belongs to the ADC family.

The catalysed reaction is acetoacetate + H(+) = acetone + CO2. Functionally, catalyzes the conversion of acetoacetate to acetone and carbon dioxide. This chain is Acetoacetate decarboxylase, found in Burkholderia cenocepacia (strain HI2424).